Reading from the N-terminus, the 35-residue chain is Photosystem II reaction center protein T (35 aa).

A helical transmembrane segment spans residues 3–23 (ALVYTFLLVSTLGIIFFAIFF).

It belongs to the PsbT family. PSII is composed of 1 copy each of membrane proteins PsbA, PsbB, PsbC, PsbD, PsbE, PsbF, PsbH, PsbI, PsbJ, PsbK, PsbL, PsbM, PsbT, PsbY, PsbZ, Psb30/Ycf12, at least 3 peripheral proteins of the oxygen-evolving complex and a large number of cofactors. It forms dimeric complexes.

The protein resides in the plastid. The protein localises to the chloroplast thylakoid membrane. In terms of biological role, found at the monomer-monomer interface of the photosystem II (PS II) dimer, plays a role in assembly and dimerization of PSII. PSII is a light-driven water plastoquinone oxidoreductase, using light energy to abstract electrons from H(2)O, generating a proton gradient subsequently used for ATP formation. This Cedrus deodara (Deodar cedar) protein is Photosystem II reaction center protein T.